The chain runs to 213 residues: Putative 3-methyladenine DNA glycosylase (213 aa).

It belongs to the DNA glycosylase MPG family.

This Paraburkholderia phytofirmans (strain DSM 17436 / LMG 22146 / PsJN) (Burkholderia phytofirmans) protein is Putative 3-methyladenine DNA glycosylase.